An 85-amino-acid polypeptide reads, in one-letter code: Large ribosomal subunit protein bL27 (85 aa).

Over residues 1–10 the composition is skewed to gly residues; sequence MAQKKGGGST. The interval 1–20 is disordered; that stretch reads MAQKKGGGSTRNGRDSKPKM.

It belongs to the bacterial ribosomal protein bL27 family.

This chain is Large ribosomal subunit protein bL27, found in Delftia acidovorans (strain DSM 14801 / SPH-1).